A 420-amino-acid chain; its full sequence is Tol-Pal system protein TolB (420 aa).

The signal sequence occupies residues 1–21; sequence MKLFVHLVLFISLFIPYFTKA.

Belongs to the TolB family. The Tol-Pal system is composed of five core proteins: the inner membrane proteins TolA, TolQ and TolR, the periplasmic protein TolB and the outer membrane protein Pal. They form a network linking the inner and outer membranes and the peptidoglycan layer.

It localises to the periplasm. Its function is as follows. Part of the Tol-Pal system, which plays a role in outer membrane invagination during cell division and is important for maintaining outer membrane integrity. The polypeptide is Tol-Pal system protein TolB (Wolbachia pipientis wMel).